The chain runs to 123 residues: Transmembrane protein 254 (123 aa).

3 helical membrane passes run 15–35, 63–83, and 95–115; these read LFWF…VFWP, NGYW…LVLC, and LLWF…LIAY.

It is found in the membrane. This Mus musculus (Mouse) protein is Transmembrane protein 254.